The following is an 838-amino-acid chain: Probable glucan 1,3-beta-glucosidase D (838 aa).

The segment covering 1–23 (MPSHSRSRDRYRGRDESEPERDR) has biased composition (basic and acidic residues). A disordered region spans residues 1–298 (MPSHSRSRDR…GASDSDMDGA (298 aa)). Over 1 to 310 (MPSHSRSRDR…GTPFWKKKKT (310 aa)) the chain is Cytoplasmic. The span at 35–45 (DYEDDELDDDD) shows a compositional bias: acidic residues. 4 stretches are compositionally biased toward basic and acidic residues: residues 111 to 124 (DSPRRRDRHRDGDR), 149 to 164 (SRDDRRERAYESEREA), 200 to 221 (AKLRSEYDKEDRSRAKADAKAE), and 234 to 246 (QPRRLDPFPEETP). A helical; Signal-anchor for type II membrane protein transmembrane segment spans residues 311 to 331 (WIAVGVVVVLLAIIIPVAVVV). The Extracellular segment spans residues 332–838 (SKKNNEKKSD…PDFGDLPENY (507 aa)). Residues 335-359 (NNEKKSDSTTDDTTPRNSNLDGISR) are disordered. N383, N388, N400, N553, and N565 each carry an N-linked (GlcNAc...) asparagine glycan. E604 (proton donor) is an active-site residue. Residues N643 and N696 are each glycosylated (N-linked (GlcNAc...) asparagine). The Nucleophile role is filled by E709.

It belongs to the glycosyl hydrolase 5 (cellulase A) family.

It is found in the cell membrane. It carries out the reaction Successive hydrolysis of beta-D-glucose units from the non-reducing ends of (1-&gt;3)-beta-D-glucans, releasing alpha-glucose.. Functionally, glucosidase involved in the degradation of cellulosic biomass. Active on lichenan. In Aspergillus terreus (strain NIH 2624 / FGSC A1156), this protein is Probable glucan 1,3-beta-glucosidase D (exgD).